The sequence spans 212 residues: Cytochrome c biogenesis ATP-binding export protein CcmA (212 aa).

In terms of domain architecture, ABC transporter spans 8 to 212; the sequence is LQATALACER…RSIDLAKGSA (205 aa). 40 to 47 is an ATP binding site; that stretch reads GPNGSGKT.

Belongs to the ABC transporter superfamily. CcmA exporter (TC 3.A.1.107) family. In terms of assembly, the complex is composed of two ATP-binding proteins (CcmA) and two transmembrane proteins (CcmB).

The protein localises to the cell inner membrane. It carries out the reaction heme b(in) + ATP + H2O = heme b(out) + ADP + phosphate + H(+). Functionally, part of the ABC transporter complex CcmAB involved in the biogenesis of c-type cytochromes; once thought to export heme, this seems not to be the case, but its exact role is uncertain. Responsible for energy coupling to the transport system. This chain is Cytochrome c biogenesis ATP-binding export protein CcmA, found in Pseudomonas syringae pv. tomato (strain ATCC BAA-871 / DC3000).